The primary structure comprises 549 residues: MSSAAPAKKPYRKAPPEHRELRLEIPVSRLEQEESLTDAERMKLLQQENEELRKRLASATRRTEALERELEIGQDCLELELGQSREELDKFKDKFRRLQNSYTASQRTNQELEDKLHALASLSHSWIFAIKKAEMDRKTLDWEIVELTNKLLDARNTINKLEELNERYRLDCNLAVQLLKCNKSHFRNHKLADLPCELQDMVRKHLRSGQEVASPSPSPSSSLSPGAVVPTSVIARVLEKPESLLLNSAQSGSAGRPLAEDVFVHVDMSGGDPASPPAPGSPNGECCSVSTAGGSPEEELPLPAFDKLSPYPTPSPPHPLYPGRKVIEFSEDKIRIPRNSPLPNCTYATRQAISLSLVEDGSERAHRSSVPSSPASAQGSPHHQPSPAPSALSAPASSASSEEDLLASWQRAFVDRTPPPAAVVQRTAFGRDSLPELQLHFSPGHSTAPPPSPHRERGLVLPAEPDSGFPQDEEEEMLNLPVSPEEERQSLLPDKEGTEEASGPSHVDGRAWPLPSPSRPQRSPKRMGVHHLHRKDSLTQAQEQGTVLS.

The segment at 1 to 34 (MSSAAPAKKPYRKAPPEHRELRLEIPVSRLEQEE) is disordered. The segment covering 14-23 (APPEHRELRL) has biased composition (basic and acidic residues). A coiled-coil region spans residues 42–171 (MKLLQQENEE…EELNERYRLD (130 aa)). 2 disordered regions span residues 207–226 (RSGQ…LSPG) and 266–322 (VDMS…PLYP). A Phosphoserine modification is found at Ser-295. The span at 311–320 (YPTPSPPHPL) shows a compositional bias: pro residues. A Phosphothreonine modification is found at Thr-313. Phosphoserine is present on residues Ser-315 and Ser-340. 3 disordered regions span residues 359-404 (EDGS…SEED), 410-429 (QRAF…RTAF), and 434-549 (LPEL…TVLS). The segment covering 369 to 383 (SVPSSPASAQGSPHH) has biased composition (polar residues). Positions 389–400 (PSALSAPASSAS) are enriched in low complexity. Thr-417 bears the Phosphothreonine mark. A Phosphoserine modification is found at Ser-483. Over residues 485–498 (EEERQSLLPDKEGT) the composition is skewed to basic and acidic residues. Residues 522–534 (RSPKRMGVHHLHR) show a composition bias toward basic residues. Ser-537 carries the phosphoserine modification. Polar residues predominate over residues 538–549 (LTQAQEQGTVLS).

As to quaternary structure, interacts with DLG1. Interacts with ARF6 (GTP-bound form). Widely expressed including in adult thymus, heart, lung, liver, small intestine, kidney, spleen, testis and skeletal muscle and in embryonic brain but not detected in adult brain (at protein level).

The protein resides in the golgi apparatus. It is found in the trans-Golgi network. The protein localises to the cell junction. It localises to the tight junction. Its subcellular location is the cell membrane. In terms of biological role, plays a role in regulating the structure of the Golgi apparatus. The chain is Tight junction-associated protein 1 from Mus musculus (Mouse).